A 477-amino-acid chain; its full sequence is Aspartyl/glutamyl-tRNA(Asn/Gln) amidotransferase subunit B (477 aa).

The protein belongs to the GatB/GatE family. GatB subfamily. In terms of assembly, heterotrimer of A, B and C subunits.

The enzyme catalyses L-glutamyl-tRNA(Gln) + L-glutamine + ATP + H2O = L-glutaminyl-tRNA(Gln) + L-glutamate + ADP + phosphate + H(+). It carries out the reaction L-aspartyl-tRNA(Asn) + L-glutamine + ATP + H2O = L-asparaginyl-tRNA(Asn) + L-glutamate + ADP + phosphate + 2 H(+). Allows the formation of correctly charged Asn-tRNA(Asn) or Gln-tRNA(Gln) through the transamidation of misacylated Asp-tRNA(Asn) or Glu-tRNA(Gln) in organisms which lack either or both of asparaginyl-tRNA or glutaminyl-tRNA synthetases. The reaction takes place in the presence of glutamine and ATP through an activated phospho-Asp-tRNA(Asn) or phospho-Glu-tRNA(Gln). This Legionella pneumophila (strain Corby) protein is Aspartyl/glutamyl-tRNA(Asn/Gln) amidotransferase subunit B.